Reading from the N-terminus, the 112-residue chain is MEKILILLLVALSVAYAAPGPRGIIINLENGELCMNSAQCKSNCCQHSSALGLARCTSMASENSECSVKTLYGIYYKCPCERGLTCEGDKTIVGSITNTNFGICHDAGRSKQ.

An N-terminal signal peptide occupies residues 1–17; that stretch reads MEKILILLLVALSVAYA. Positions 18-22 are cleaved as a propeptide — enterostatin, activation peptide; the sequence is APGPR. 5 cysteine pairs are disulfide-bonded: cysteine 34/cysteine 45, cysteine 40/cysteine 56, cysteine 44/cysteine 78, cysteine 66/cysteine 86, and cysteine 80/cysteine 104.

The protein belongs to the colipase family. Forms a 1:1 stoichiometric complex with pancreatic lipase. Expressed by the pancreas.

It is found in the secreted. In terms of biological role, colipase is a cofactor of pancreatic lipase. It allows the lipase to anchor itself to the lipid-water interface. Without colipase the enzyme is washed off by bile salts, which have an inhibitory effect on the lipase. Functionally, enterostatin has a biological activity as a satiety signal. The protein is Colipase of Homo sapiens (Human).